The sequence spans 81 residues: Cytochrome b559 subunit alpha (81 aa).

The chain crosses the membrane as a helical span at residues 22 to 36 (VIHSITIPSLFIAGW). Histidine 24 lines the heme pocket.

It belongs to the PsbE/PsbF family. Heterodimer of an alpha subunit and a beta subunit. PSII is composed of 1 copy each of membrane proteins PsbA, PsbB, PsbC, PsbD, PsbE, PsbF, PsbH, PsbI, PsbJ, PsbK, PsbL, PsbM, PsbT, PsbX, PsbY, PsbZ, Psb30/Ycf12, at least 3 peripheral proteins of the oxygen-evolving complex and a large number of cofactors. It forms dimeric complexes. Heme b is required as a cofactor.

The protein localises to the plastid. It is found in the chloroplast thylakoid membrane. In terms of biological role, this b-type cytochrome is tightly associated with the reaction center of photosystem II (PSII). PSII is a light-driven water:plastoquinone oxidoreductase that uses light energy to abstract electrons from H(2)O, generating O(2) and a proton gradient subsequently used for ATP formation. It consists of a core antenna complex that captures photons, and an electron transfer chain that converts photonic excitation into a charge separation. The chain is Cytochrome b559 subunit alpha from Cyanidioschyzon merolae (strain NIES-3377 / 10D) (Unicellular red alga).